Reading from the N-terminus, the 302-residue chain is 1,2-dihydroxynaphthalene dioxygenase (302 aa).

VOC domains follow at residues 9–124 and 149–270; these read ELGY…IFWG and GLGH…PGWR. His152 contributes to the Fe cation binding site. Substrate contacts are provided by residues His152, 199 to 200, His215, and Tyr256; that span reads DH. His215 contacts Fe cation. Glu266 contacts Fe cation.

Belongs to the extradiol ring-cleavage dioxygenase family. The cofactor is Fe(2+).

It catalyses the reaction naphthalene-1,2-diol + O2 = 2-hydroxychromene-2-carboxylate + H(+). It participates in aromatic compound metabolism; naphthalene degradation. Involved in the naphthalene catabolic pathway. Catalyzes the meta-cleavage of 1,2-dihydroxynaphthalene (1,2-DHN) to yield 2-hydroxychromene-2-carboxylic acid. The polypeptide is 1,2-dihydroxynaphthalene dioxygenase (nahC) (Pseudomonas putida (Arthrobacter siderocapsulatus)).